We begin with the raw amino-acid sequence, 205 residues long: MKYTGSIFKRSRRLGFSLLENNKEFSKGKKRKTIPGQHGNRFRSSTMSGYAQQLQEKQRMQYMYGITDKQFRRLFRLVLKQRGNLAVNLFRVLESRLDNIVYRMGFAPTRRSARQLVNHGHVLLNDRTVDTPSIILNPGDKVRLKAKTIKIPIVKAASESGVVSPFVETNNKTFEGTYVRFPERSELPAGINESYVVEWYKRLVK.

The region spanning 95–156 is the S4 RNA-binding domain; sequence SRLDNIVYRM…KTIKIPIVKA (62 aa).

It belongs to the universal ribosomal protein uS4 family. In terms of assembly, part of the 30S ribosomal subunit. Contacts protein S5. The interaction surface between S4 and S5 is involved in control of translational fidelity.

One of the primary rRNA binding proteins, it binds directly to 16S rRNA where it nucleates assembly of the body of the 30S subunit. In terms of biological role, with S5 and S12 plays an important role in translational accuracy. This Mycoplasma pneumoniae (strain ATCC 29342 / M129 / Subtype 1) (Mycoplasmoides pneumoniae) protein is Small ribosomal subunit protein uS4.